A 170-amino-acid chain; its full sequence is Shikimate kinase (170 aa).

11 to 16 (LSGKST) contacts ATP. S15 is a Mg(2+) binding site. Substrate-binding residues include D33, R57, and G79. An ATP-binding site is contributed by R119. Position 137 (R137) interacts with substrate.

This sequence belongs to the shikimate kinase family. Monomer. It depends on Mg(2+) as a cofactor.

The protein localises to the cytoplasm. It catalyses the reaction shikimate + ATP = 3-phosphoshikimate + ADP + H(+). The protein operates within metabolic intermediate biosynthesis; chorismate biosynthesis; chorismate from D-erythrose 4-phosphate and phosphoenolpyruvate: step 5/7. In terms of biological role, catalyzes the specific phosphorylation of the 3-hydroxyl group of shikimic acid using ATP as a cosubstrate. In Clostridium botulinum (strain 657 / Type Ba4), this protein is Shikimate kinase.